A 4903-amino-acid chain; its full sequence is MSSEEDRSAEQQQPPPAPPEEPGAPAPSPAAADKRPRGRPRKDGASPFQRARKKPRSRGKSTVEDEDSMDGLETTETENIVETEIKEQSVEEDAETEVDSSKQPVSALQRSVSEESANSLVSVGVEAKISEQLCAFCYCGEKSSLGQGDLKQFRVTPGLTLPWKDQPSNKDIDDNSSGTCEKIQNYAPRKQRGQRKERPPQQSAVSCVSVSTQTACEDQAGKLWDELSLVGLPDAIDVQALFDSTGTCWAHHRCVEWSLGICQMEEPLLVNVDKAVVSGSTERCAFCKHLGATIKCCEEKCTQMYHYPCAAGAGTFQDFSHFFLLCPEHIDQAPERSKEDANCAVCDSPGDLLDQFFCTTCGQHYHGMCLDIAVTPLKRAGWQCPECKVCQNCKQSGEDSKMLVCDTCDKGYHTFCLQPVMKSVPTNGWKCKNCRICIECGTRSSTQWHHNCLICDTCYQQQDNLCPFCGKCYHPELQKDMLHCNMCKRWVHLECDKPTDQELDSQLKEDYICMYCKHLGAEIDPLHPGNEVEMPELPTDYASGMEIEGTEDEVVFLEQTVNKDVSDHQCRPGIVPDVQVYTEEPQKSNPLESPDTVGLITSESSDNKMNPDLANEIAHEVDTEKTEMLSKGRHVCEEDQNEDRMEVTENIEVLPHQTIVPQEDLLLSEDSEVASKELSPPKSAPETAAPEALLSPHSERSLSCKEPLLTERVQEEMEQKENSEFSTGCVDFEMTLAVDSCDKDSSCQGDKYVELPAEEESTFSSATDLNKADVSSSSTLCSDLPSCDMLHGYPPAFNSAAGSIMPTTYISVTPKIGMGKPAITKRKFSPGRPRSKQGAWSNHNTVSPPSWAPDTSEGREIFKPRQLSGSAIWSIKVGRGSGFPGKRRPRGAGLSGRGGRGRSKLKSGIGAVVLPGVSAADISSNKDEEENSMHNTVVLFSSSDKFTLQQDMCVVCGSFGQGAEGRLLACSQCGQCYHPYCVSIKITKVVLSKGWRCLECTVCEACGKATDPGRLLLCDDCDISYHTYCLDPPLQTVPKGGWKCKWCVWCRHCGATSAGLRCEWQNNYTQCAPCASLSSCPVCCRNYREEDLILQCRQCDRWMHAVCQNLNTEEEVENVADIGFDCSMCRPYMPVSNVPSSDCCDSSLVAQIVTKVKELDPPKTYTQDGVCLTESGMSQLQSLTVTAPRRKRTKPKLKLKIINQNSVAVLQTPPDIQSEHSRDGEMDDSREGELMDCDGKSESSPEREAGDDETKGIEGTDAIKKRKRKPYRPGIGGFMVRQRSRTGQGKAKRSVVRKDSSGSISEQLPSRDDGWREQLPDTLVDEPVSVAENTDKIKKRYRKRKNKLEETFPAYLQEAFFGKDLLDTSRQNKLSVDNLSEDAAQLSFKTGFLDPSSDPLLSSSSTSAKPGTQGTADDPLADISEVLNTDDDILGIISDDLAKSVDHSDIGPTTADASSLPQPGVSQSSRPLTEEQLDGILSPELDKMVTDGAILGKLYKIPELGGKDVEDLFTAVLSPATTQPAPLPQPPPPPQLLPMHNQDVFSRMPLMNGLIGPSPHLPHNSLPPGSGLGTFPAIAQSPYTDVRDKSPAFNAIASDPNSSWAPTTPSMEGENDTLSNAQRSTLKWEKEEALGEMATVAPVLYTNINFPNLKEEFPDWTTRVKQIAKLWRKASSQERAPYVQKARDNRAALRINKVQMSNDSMKRQQQQDSIDPSSRIDSDLFKDPLKQRESEHEQEWKFRQQMRQKSKQQAKIEATQKLEQVKNEQQQQQQQQQQQQQQQLASQHLLVAPGSDTPSSGAQSPLTPQAGNGNVSPAQTFHKDLFSKHLPGTPASTPSDGVFVKPQPPPPPSTPSRIPVQESLSQSQNSQPPSPQMFSPGSSHSRPPSPVDPYAKMVGTPRPPPGGHSFPRRNSVTPVENCVPLSSVPRPIHMNETSATRPSPARDLCASSMTNSDPYAKPPDTPRPMMTDQFSKPFSLPRSPVISEQSTKGPLTTGTSDHFTKPSPRTDAFQRQRLPDPYAGPSLTPAPLGNGPFKTPLHPPPSQDPYGSVSQTSRRLSVDPYERPALTPRPVDNFSHSQSNDPYSHPPLTPHPAMTESFTHASRAFPQPGTISRSASQDPYSQPPGTPRPLIDSYSQTSGTARSNPDPYSQPPGTPRPNTIDPYSQQPPTPRPSPQTDMFVSSVANQRHTDPYTHHLGPPRPGISVPYSQPPAVPRPRTSEGFTRPSSARPALMPNQDPFLQAAQNRVPGLPGPLIRPPDTCSQTPRPPGPGRIDTFTHASSSAVRDPYDQPPVTPRPHSESFGTSQVVHDLVDRPVPGSEGNFSTSSNLPVSSQGQQFSSVSQLPGPVPTSGGTDTQNTVNMSQADTEKLRQRQKLREIILQQQQQKKIASRQEKGPQDTAVVPHPVPLPHWQPESINQAFTRPPPPYPGSTRSPVIPPLGPRYAVFPKDQRGPYPPEVAGMGMRPHGFRFGFPGAGHGPMPSQDRFHVPQQIQGSGIPPHIRRPMSMEMPRPSNNPPLNNPVGLPQHFPPQGLPVQQHNILGQAFIELRHRAPDGRSRLPFAASPSSVIESPSHPRHGNFLPRPDFPGPRHTDPIRQPSQCLSNQLPVHPNLEQVPPSQQEQGHPAHQSSIVMRPLNHPLSGEFSEAPLSTSTPAETSPDNLEIAGQSSAGLEEKLDSDDPSVKELDVKDLEGVEVKDLDDEDLENLNLDTEDGKGDDLDTLDNLETNDPNLDDLLRSGEFDIIAYTDPELDLGDKKSMFNEELDLNVPIDDKLDNQCASVEPKTRDQGDKTMVLEDKDLPQRKSSVSSEIKTEALSPYSKEEIQSEIKNHDDSRGDADTACSQAASAQTNHSDRGKTALLTTDQDMLEKRCNQENAGPVVSAIQGSTPLPARDVMNSCDITGSTPVLSSLLSNEKCDDSDIRPSGSSPPSLPISPSTHGSSLPPTLIVPPSPLLDNTVNSNVTVVPRINHAFSQGVPVNPGFIQGQSSVNHNLGTGKPTNQTVPLTNQSSTMSGPQQLMIPQTLAQQNRERPLLLEEQPLLLQDLLDQERQEQQQQRQMQAMIRQRSEPFFPNIDFDAITDPIMKAKMVALKGINKVMAQNSLGMPPMVMSRFPFMGPSVAGTQNNDGQTLVPQAVAQDGSITHQISRPNPPNFGPGFVNDSQRKQYEEWLQETQQLLQMQQKYLEEQIGAHRKSKKALSAKQRTAKKAGREFPEEDAEQLKHVTEQQSMVQKQLEQIRKQQKEHAELIEDYRIKQQQQQQQCALAPPILMPGVQPQPPLVPGATSLTMSQPNFPMVPQQLQHQQHTAVISGHTSPARMPSLPGWQSNSASAHLPLNPPRIQPPIAQLSLKTCTPAPGTVSSANPQNGPPPRVEFDDNNPFSESFQERERKERLREQQERQRVQLMQEVDRQRALQQRMEMEQHCLMGAELANRTPVSQMPFYGSDRPCDFLQPPRPLQQSPQHQQQIGPVLQQQNVQQGSVNSPPNQTFMQTNEQRQVGPPSFVPDSPSASGGSPNFHSVKPGHGNLPGSSFQQSPLRPPFTPILPGTSPVANSNVPCGQDPAVTQGQNYSGSSQSLIQLYSDIIPEEKGKKKRTRKKKKDDDAESGKAPSTPHSDCAAPLTPGLSETTSTPAVSSPSELPQQRQQEPVEPVPVPTPNVSAGQPCIESENKLPNSEFIKETSNQQTHVNAEADKPSVETPNKTEEIKLEKAETQPSQEDTKVEEKTGNKIKDIVAGPVSSIQCPSHPVGTPTTKGDTGNELLKHLLKNKKASSLLTQKPEGTLSSDESSTKDGKLIEKQSPAEGLQTLGAQMQGGFGGGNSQLPKTDGASENKKQRSKRTQRTGEKAAPRSKKRKKDEEEKQAMYSSSDSFTHLKQQNNLSNPPTPPASLPPTPPPMACQKMANGFATTEELAGKAGVLVSHEVARALGPKPFQLPFRPQDDLLARAIAQGPKTVDVPASLPTPPHNNHEELRIQDHYGDRDTPDSFVPSSSPESVVGVEVNKYPDLSLVKEEPPEPVPSPIIPILPSISGKNSESRRNDIKTEPGTLFFTSPFGSSPNGPRSGLISVAITLHPTAAENISSVVAAFSDLLHVRIPNSYEVSNAPDVPPMGLVSSHRVNPSLEYRQHLLLRGPPPGSANPPRLATSYRLKQPNVPFPPTSNGLSGYKDSSHGPAEGASLRPQWCCHCKVVILGSGVRKSCKDLTFVNKGSRENTKRMEKDIVFCSNNCFILYSSAAQAKNSDNKESLPSLPQSPMKEPSKAFHQYSNNISTLDVHCLPQFQEKVSPPASPPISFPPAFEAAKVESKPDELKVTVKLKPRLRTVPVGLEDCRPLNKKWRGMKWKKWSIHIVIPKGTFKPPCEDEIDEFLKKLGTCLKPDPVPKDCRKCCFCHEEGDGLTDGPARLLNLDLDLWVHLNCALWSTEVYETQAGALINVELALRRGLQMKCVFCHKTGATSGCHRFRCTNIYHFTCATKAQCMFFKDKTMLCPMHKPKGIHEQQLSYFAVFRRVYVQRDEVRQIASIVQRGERDHTFRVGSLIFHTIGQLLPQQMQAFHSPKALFPVGYEASRLYWSTRYANRRCRYLCSIEEKDGRPVFVIRIVEQGHEDLVLSDSSPKDVWDKILEPVACVRKKSEMLQLFPAYLKGEDLFGLTVSAVARIAESLPGVEACENYTFRYGRNPLMELPLAVNPTGCARSEPKMSAHVKRFVLRPHTLNSTSTSKSFQSTVTGELNAPYSKQFVHSKSSQYRRMKTEWKSNVYLARSRIQGLGLYAARDIEKHTMVIEYIGTIIRNEVANRKEKLYESQNRGVYMFRMDNDHVIDATLTGGPARYINHSCAPNCVAEVVTFERGHKIIISSNRRIQKGEELCYDYKFDFEDDQHKIPCHCGAVNCRKWMN.

Disordered regions lie at residues 1–116 and 159–202; these read MSSE…SEES and LTLP…PPQQ. Residues 13–28 show a composition bias toward pro residues; that stretch reads QPPPAPPEEPGAPAPS. 2 positions are modified to phosphoserine: Ser28 and Ser46. A DNA-binding region (a.T hook) is located at residues 34-46; sequence KRPRGRPRKDGAS. Residues 50-59 show a composition bias toward basic residues; it reads RARKKPRSRG. Residues 64–81 are compositionally biased toward acidic residues; the sequence is EDEDSMDGLETTETENIV. A phosphoserine mark is found at Ser89 and Ser113. A compositionally biased stretch (polar residues) spans 101–116; sequence SKQPVSALQRSVSEES. The C2HC pre-PHD-type 1; degenerate zinc finger occupies 226–261; sequence ELSLVGLPDAIDVQALFDSTGTCWAHHRCVEWSLGI. 4 PHD-type zinc fingers span residues 282 to 330, 340 to 390, 387 to 437, and 463 to 519; these read ERCA…PEHI, DANC…CKVC, CKVC…CRIC, and DNLC…CKHL. An RING-type zinc finger spans residues 343–388; the sequence is CAVCDSPGDLLDQFFCTTCGQHYHGMCLDIAVTPLKRAGWQCPECK. Positions 435 to 488 constitute a DHHC domain; the sequence is RICIECGTRSSTQWHHNCLICDTCYQQQDNLCPFCGKCYHPELQKDMLHCNMCK. The interval 671 to 703 is disordered; the sequence is SEVASKELSPPKSAPETAAPEALLSPHSERSLS. Lys751 is modified (N6-acetyllysine). Residues 824–835 show a composition bias toward basic residues; the sequence is TKRKFSPGRPRS. 2 disordered regions span residues 824 to 857 and 882 to 904; these read TKRKFSPGRPRSKQGAWSNHNTVSPPSWAPDTSE and GFPGKRRPRGAGLSGRGGRGRSK. Residues 838 to 848 are compositionally biased toward polar residues; the sequence is GAWSNHNTVSP. Ser847 is subject to Phosphoserine. 3 consecutive PHD-type zinc fingers follow at residues 950-1003, 1000-1050, and 1077-1132; these read QDMC…CTVC, CTVC…CVWC, and LSSC…CRPY. The tract at residues 1208–1318 is disordered; sequence AVLQTPPDIQ…PSRDDGWREQ (111 aa). The span at 1217-1263 shows a compositional bias: basic and acidic residues; sequence QSEHSRDGEMDDSREGELMDCDGKSESSPEREAGDDETKGIEGTDAI. Ser1294 carries the phosphoserine modification. A compositionally biased stretch (basic and acidic residues) spans 1309-1318; the sequence is PSRDDGWREQ. The stretch at 1330–1352 forms a coiled coil; the sequence is VAENTDKIKKRYRKRKNKLEETF. Disordered stretches follow at residues 1397 to 1419 and 1447 to 1473; these read SDPLLSSSSTSAKPGTQGTADDP and HSDIGPTTADASSLPQPGVSQSSRPLT. 2 stretches are compositionally biased toward polar residues: residues 1406-1415 and 1455-1471; these read TSAKPGTQGT and ADASSLPQPGVSQSSRP. An N6-acetyllysine modification is found at Lys1497. Disordered regions lie at residues 1594-1617 and 1698-1757; these read NAIASDPNSSWAPTTPSMEGENDT and VQMS…AKIE. Residues 1599–1617 show a composition bias toward polar residues; it reads DPNSSWAPTTPSMEGENDT. The span at 1707–1717 shows a compositional bias: low complexity; that stretch reads RQQQQDSIDPS. Residues 1718 to 1742 show a composition bias toward basic and acidic residues; sequence SRIDSDLFKDPLKQRESEHEQEWKF. Positions 1743-1790 form a coiled coil; that stretch reads RQQMRQKSKQQAKIEATQKLEQVKNEQQQQQQQQQQQQQQQLASQHLL. Lys1761 is subject to N6-acetyllysine. The tract at residues 1791–2375 is disordered; it reads VAPGSDTPSS…MSQADTEKLR (585 aa). Residues 1796–1819 are compositionally biased toward polar residues; that stretch reads DTPSSGAQSPLTPQAGNGNVSPAQ. A compositionally biased stretch (low complexity) spans 1855–1886; it reads PSRIPVQESLSQSQNSQPPSPQMFSPGSSHSR. The residue at position 1983 (Ser1983) is a Phosphoserine. A compositionally biased stretch (polar residues) spans 1986-2001; sequence ISEQSTKGPLTTGTSD. Lys2005 carries the post-translational modification N6-acetyllysine. Polar residues-rich tracts occupy residues 2113–2124, 2137–2151, and 2325–2334; these read GTISRSASQDPY, SYSQTSGTARSNPDP, and GNFSTSSNLP. Over residues 2335 to 2347 the composition is skewed to low complexity; sequence VSSQGQQFSSVSQ. Over residues 2355–2369 the composition is skewed to polar residues; sequence SGGTDTQNTVNMSQA. Arg2447 and Arg2563 each carry asymmetric dimethylarginine. Disordered stretches follow at residues 2561 to 2668, 2702 to 2736, and 2786 to 2844; these read RSRL…DNLE, KDLDDEDLENLNLDTEDGKGDDLDTLDNLETNDPN, and VEPK…GDAD. 3 stretches are compositionally biased toward polar residues: residues 2602–2611, 2621–2636, and 2653–2668; these read QPSQCLSNQL, PPSQQEQGHPAHQSSI, and PLSTSTPAETSPDNLE. Over residues 2788 to 2807 the composition is skewed to basic and acidic residues; sequence PKTRDQGDKTMVLEDKDLPQ. Residues Lys2796 and Lys2803 each carry the N6-acetyllysine modification. Position 2822 is a phosphoserine (Ser2822). The residue at position 2824 (Tyr2824) is a Phosphotyrosine. Basic and acidic residues predominate over residues 2825–2843; it reads SKEEIQSEIKNHDDSRGDA. N6-acetyllysine occurs at positions 2826 and 2862. A disordered region spans residues 2920–2953; it reads EKCDDSDIRPSGSSPPSLPISPSTHGSSLPPTLI. Positions 2929–2942 are enriched in low complexity; that stretch reads PSGSSPPSLPISPS. Coiled coils occupy residues 3047–3074 and 3166–3193; these read LLQDLLDQERQEQQQQRQMQAMIRQRSE and NDSQRKQYEEWLQETQQLLQMQQKYLEE. Over residues 3198-3214 the composition is skewed to basic residues; that stretch reads HRKSKKALSAKQRTAKK. The segment at 3198 to 3223 is disordered; sequence HRKSKKALSAKQRTAKKAGREFPEED. 2 coiled-coil regions span residues 3224 to 3270 and 3387 to 3432; these read AEQL…QQCA and FSES…QHCL. Disordered stretches follow at residues 3329–3407 and 3444–3910; these read PGWQ…QERQ and SQMP…QKMA. Residues 3391 to 3407 are compositionally biased toward basic and acidic residues; it reads FQERERKERLREQQERQ. The segment covering 3464–3485 has biased composition (low complexity); it reads LQQSPQHQQQIGPVLQQQNVQQ. Polar residues-rich tracts occupy residues 3486-3503, 3515-3524, 3557-3586, and 3632-3647; these read GSVNSPPNQTFMQTNEQR, PSASGGSPNF, PVANSNVPCGQDPAVTQGQNYSGSSQSLIQ, and LSETTSTPAVSSPSEL. Basic and acidic residues-rich tracts occupy residues 3697-3739 and 3795-3804; these read AEAD…KIKD and SSTKDGKLIE. Lys3709 carries the post-translational modification N6-acetyllysine. Over residues 3871 to 3885 the composition is skewed to polar residues; it reads MYSSSDSFTHLKQQN. The segment covering 3890–3904 has biased composition (pro residues); sequence PPTPPASLPPTPPPM. Position 4027 is a phosphoserine (Ser4027). At Arg4132 the chain carries Asymmetric dimethylarginine. The interval 4159–4184 is disordered; sequence PNVPFPPTSNGLSGYKDSSHGPAEGA. Ser4260 bears the Phosphoserine mark. Residues 4391–4431 form a C2HC pre-PHD-type 2 zinc finger; that stretch reads CRKCCFCHEEGDGLTDGPARLLNLDLDLWVHLNCALWSTEV. The PHD-type 8 zinc finger occupies 4452-4499; it reads MKCVFCHKTGATSGCHRFRCTNIYHFTCATKAQCMFFKDKTMLCPMHK. The region spanning 4537-4597 is the FYR N-terminal domain; sequence DHTFRVGSLI…CRYLCSIEEK (61 aa). Positions 4598-4683 constitute an FYR C-terminal domain; it reads DGRPVFVIRI…EACENYTFRY (86 aa). The short motif at 4699–4704 is the WDR5 interaction motif (WIN) element; it reads GCARSE. The region spanning 4763–4879 is the SET domain; it reads SNVYLARSRI…KGEELCYDYK (117 aa). Residues Tyr4817 and 4840-4841 contribute to the S-adenosyl-L-methionine site; that span reads NH. The Zn(2+) site is built by Cys4843, Cys4891, Cys4893, and Cys4898. The Post-SET domain maps to 4887–4903; it reads HKIPCHCGAVNCRKWMN.

The protein belongs to the class V-like SAM-binding methyltransferase superfamily. Histone-lysine methyltransferase family. TRX/MLL subfamily. Component of the MLL3 complex (also named ASCOM complex), at least composed of catalytic subunit KMT2C/MLL3, ASH2L, RBBP5, WDR5, NCOA6, DPY30, KDM6A, PAXIP1/PTIP, PAGR1 and alpha- and beta-tubulin. Forms a core complex with the evolutionary conserved subcomplex WRAD composed of WDR5, RBBP5, ASH2L/ASH2 and DPY30 subunits; WRAD differentially stimulates the methyltransferase activity. Interacts (via WIN motif) with WDR5. In terms of tissue distribution, in adult, detected in testis, kidney, spleen and lung, weakly expressed in brain and absent in heart and liver. First detected throughout the embryo at 8 dpc when expression is strong in forebrain neuroepithelium and absent in heart. Expressed in the eye lens between 10 and 14.5 dpc. By 13 dpc, expressed strongly in spinal cord, hand/foot plates and gonads.

The protein localises to the nucleus. It catalyses the reaction L-lysyl(4)-[histone H3] + S-adenosyl-L-methionine = N(6)-methyl-L-lysyl(4)-[histone H3] + S-adenosyl-L-homocysteine + H(+). Functionally, histone methyltransferase that catalyzes methyl group transfer from S-adenosyl-L-methionine to the epsilon-amino group of 'Lys-4' of histone H3 (H3K4). Part of chromatin remodeling machinery predominantly forms H3K4me1 methylation marks at active chromatin sites where transcription and DNA repair take place. Likely plays a redundant role with KMT2D in enriching H3K4me1 mark on primed and active enhancer elements. This chain is Histone-lysine N-methyltransferase 2C (Kmt2c), found in Mus musculus (Mouse).